A 164-amino-acid chain; its full sequence is Phosphopantetheine adenylyltransferase (164 aa).

Residue S9 participates in substrate binding. ATP is bound by residues 9-10 and H17; that span reads SF. 3 residues coordinate substrate: K41, V78, and R92. ATP is bound by residues 93-95, E103, and 128-134; these read GLR and VRTITAT.

This sequence belongs to the bacterial CoaD family. In terms of assembly, homohexamer. It depends on Mg(2+) as a cofactor.

It localises to the cytoplasm. The catalysed reaction is (R)-4'-phosphopantetheine + ATP + H(+) = 3'-dephospho-CoA + diphosphate. Its pathway is cofactor biosynthesis; coenzyme A biosynthesis; CoA from (R)-pantothenate: step 4/5. Reversibly transfers an adenylyl group from ATP to 4'-phosphopantetheine, yielding dephospho-CoA (dPCoA) and pyrophosphate. The sequence is that of Phosphopantetheine adenylyltransferase from Brucella suis (strain ATCC 23445 / NCTC 10510).